The primary structure comprises 361 residues: Peptide chain release factor 1 (361 aa).

Q237 carries the N5-methylglutamine modification. Positions E284–R296 are enriched in basic and acidic residues. Positions E284–R305 are disordered.

It belongs to the prokaryotic/mitochondrial release factor family. Post-translationally, methylated by PrmC. Methylation increases the termination efficiency of RF1.

It is found in the cytoplasm. Its function is as follows. Peptide chain release factor 1 directs the termination of translation in response to the peptide chain termination codons UAG and UAA. The protein is Peptide chain release factor 1 of Shewanella piezotolerans (strain WP3 / JCM 13877).